A 338-amino-acid chain; its full sequence is Putative acyl-[acyl-carrier-protein] desaturase DesA1 (338 aa).

The Fe cation site is built by Glu76, Glu107, His110, Glu167, Glu197, and His200. Positions 314-328 (EARTGKKVSAHELHK) are enriched in basic and acidic residues. The interval 314-338 (EARTGKKVSAHELHKTAGKLAMSRR) is disordered.

This sequence belongs to the fatty acid desaturase type 2 family. In terms of assembly, homodimer. It depends on Fe(2+) as a cofactor.

It is found in the cell surface. The protein operates within lipid metabolism; fatty acid metabolism. Its function is as follows. May be a desaturase involved in mycobacterial fatty acid biosynthesis. This chain is Putative acyl-[acyl-carrier-protein] desaturase DesA1 (desA1), found in Mycobacterium tuberculosis (strain CDC 1551 / Oshkosh).